The following is a 464-amino-acid chain: 3-isopropylmalate dehydratase large subunit (464 aa).

3 residues coordinate [4Fe-4S] cluster: Cys-337, Cys-397, and Cys-400.

Belongs to the aconitase/IPM isomerase family. LeuC type 1 subfamily. Heterodimer of LeuC and LeuD. The cofactor is [4Fe-4S] cluster.

It catalyses the reaction (2R,3S)-3-isopropylmalate = (2S)-2-isopropylmalate. It functions in the pathway amino-acid biosynthesis; L-leucine biosynthesis; L-leucine from 3-methyl-2-oxobutanoate: step 2/4. In terms of biological role, catalyzes the isomerization between 2-isopropylmalate and 3-isopropylmalate, via the formation of 2-isopropylmaleate. The polypeptide is 3-isopropylmalate dehydratase large subunit (Bacillus cereus (strain ZK / E33L)).